Reading from the N-terminus, the 419-residue chain is UDP-N-acetylglucosamine 1-carboxyvinyltransferase (419 aa).

Position 22-23 (22-23 (KN)) interacts with phosphoenolpyruvate. Arg93 contacts UDP-N-acetyl-alpha-D-glucosamine. The active-site Proton donor is the Cys117. A 2-(S-cysteinyl)pyruvic acid O-phosphothioketal modification is found at Cys117. Residues Asp307 and Ile329 each contribute to the UDP-N-acetyl-alpha-D-glucosamine site.

It belongs to the EPSP synthase family. MurA subfamily.

It localises to the cytoplasm. The enzyme catalyses phosphoenolpyruvate + UDP-N-acetyl-alpha-D-glucosamine = UDP-N-acetyl-3-O-(1-carboxyvinyl)-alpha-D-glucosamine + phosphate. It functions in the pathway cell wall biogenesis; peptidoglycan biosynthesis. In terms of biological role, cell wall formation. Adds enolpyruvyl to UDP-N-acetylglucosamine. The protein is UDP-N-acetylglucosamine 1-carboxyvinyltransferase of Shewanella sp. (strain ANA-3).